We begin with the raw amino-acid sequence, 258 residues long: UPF0246 protein Jann_0444 (258 aa).

This sequence belongs to the UPF0246 family.

This Jannaschia sp. (strain CCS1) protein is UPF0246 protein Jann_0444.